The chain runs to 316 residues: B3 domain-containing protein Os04g0581400 (316 aa).

The interval 1 to 100 is disordered; that stretch reads MEFATTSSRF…GSGGGGGGED (100 aa). The span at 13-36 shows a compositional bias: acidic residues; it reads EEEEEEEGEQEMEQEQDEEEEEAE. Residues 46-77 are compositionally biased toward low complexity; that stretch reads TSAAAAATASSSSPTSVSPSATASAAASTSAS. The span at 88–98 shows a compositional bias: gly residues; the sequence is GASGSGGGGGG. A DNA-binding region (TF-B3) is located at residues 110–215; it reads FDKVVTPSDV…RLFIDWKRRA (106 aa). The interval 239–290 is disordered; that stretch reads GGAGASSCRPRRPPRSTSITAFARASTSATSTPLCRRGSSSSSAPQGRGFIS. Positions 253 to 270 are enriched in low complexity; the sequence is RSTSITAFARASTSATST.

The protein resides in the nucleus. The sequence is that of B3 domain-containing protein Os04g0581400 from Oryza sativa subsp. japonica (Rice).